The sequence spans 269 residues: 5'-nucleotidase SurE (269 aa).

A divalent metal cation is bound by residues Asp-11, Asp-12, Ser-42, and Asn-90.

The protein belongs to the SurE nucleotidase family. The cofactor is a divalent metal cation.

The protein resides in the cytoplasm. It catalyses the reaction a ribonucleoside 5'-phosphate + H2O = a ribonucleoside + phosphate. In terms of biological role, nucleotidase that shows phosphatase activity on nucleoside 5'-monophosphates. The polypeptide is 5'-nucleotidase SurE (Haloarcula marismortui (strain ATCC 43049 / DSM 3752 / JCM 8966 / VKM B-1809) (Halobacterium marismortui)).